Here is a 488-residue protein sequence, read N- to C-terminus: N-acyl-D-glutamate deacylase (488 aa).

The protein belongs to the metallo-dependent hydrolases superfamily. N-acyl-D-amino-acid deacylase family. Zn(2+) is required as a cofactor.

The protein localises to the cytoplasm. The enzyme catalyses an N-acyl-D-glutamate + H2O = D-glutamate + a carboxylate. Its activity is regulated as follows. Inhibited by cobalt, copper and EDTA. The sequence is that of N-acyl-D-glutamate deacylase from Alcaligenes xylosoxydans xylosoxydans (Achromobacter xylosoxidans).